The primary structure comprises 288 residues: MAFRQALQLAACGLAGGSAAVLFSAVAVGKPRAGGDADTRTTEPLAWTGARPGHGVWDSNWDRREPLSLINLKKRNVEFGEDELASRLDHYKAKATRHIFLIRHSQYNVDGSMEKDRTLTPLGREQAELTGIRLASLGLKFNKIVHSSMTRAVETTDIISKHLPGVCRVSTDLLREGAPIEPDPPVSHWKPEAVQYYEDGARIEAAFRNYIHRADAKQEEDSYEIFICHANVIRYIVCRALQFPPEGWLRLSLNNGSITHLVIRPNGRVALRTLGDTGFMPPDKITRS.

The Mitochondrial matrix portion of the chain corresponds to 1–6 (MAFRQA). The chain crosses the membrane as a helical span at residues 7–29 (LQLAACGLAGGSAAVLFSAVAVG). The Mitochondrial intermembrane portion of the chain corresponds to 30–288 (KPRAGGDADT…FMPPDKITRS (259 aa)). An interaction with KEAP1 region spans residues 76-81 (NVEFGE). S86 is subject to Phosphoserine. N6-acetyllysine occurs at positions 115, 143, and 190.

Belongs to the phosphoglycerate mutase family. BPG-dependent PGAM subfamily. In terms of assembly, dimer. Forms a ternary complex with NFE2L2 and KEAP1. Interacts with BCL2L1 and MAP3K5. Upon TNF-induced necrosis, forms in complex with RIPK1, RIPK3 and MLKL; the formation of this complex leads to PGAM5 phosphorylation. Isoform 2, but not isoform 1, interacts with DNM1L; this interaction leads to DNM1L dephosphorylation and activation and eventually to mitochondria fragmentation. In terms of processing, phosphorylated by the RIPK1/RIPK3 complex under necrotic conditions. This phosphorylation increases PGAM5 phosphatase activity. Post-translationally, proteolytically cleaved by PARL in response to loss of mitochondrial membrane potential.

It is found in the mitochondrion outer membrane. The protein localises to the mitochondrion inner membrane. It carries out the reaction O-phospho-L-seryl-[protein] + H2O = L-seryl-[protein] + phosphate. It catalyses the reaction O-phospho-L-threonyl-[protein] + H2O = L-threonyl-[protein] + phosphate. In terms of biological role, mitochondrial serine/threonine phosphatase that dephosphorylates various substrates and thus plays a role in different biological processes including cellular senescence or mitophagy. Modulates cellular senescence by regulating mitochondrial dynamics. Mechanistically, participates in mitochondrial fission through dephosphorylating DNM1L/DRP1. Additionally, dephosphorylates MFN2 in a stress-sensitive manner and consequently protects it from ubiquitination and degradation to promote mitochondrial network formation. Regulates mitophagy independent of PARKIN by interacting with and dephosphorylating FUNDC1, which interacts with LC3. Regulates anti-oxidative response by forming a tertiary complex with KEAP1 and NRF2. Regulates necroptosis by acting as a RIPK3 target and recruiting the RIPK1-RIPK3-MLKL necrosis 'attack' complex to mitochondria. The chain is Serine/threonine-protein phosphatase PGAM5, mitochondrial (Pgam5) from Rattus norvegicus (Rat).